The following is a 158-amino-acid chain: Protein Smg homolog (158 aa).

Belongs to the Smg family.

This Thioalkalivibrio sulfidiphilus (strain HL-EbGR7) protein is Protein Smg homolog.